The primary structure comprises 373 residues: 3 beta-hydroxysteroid dehydrogenase/Delta 5--&gt;4-isomerase (373 aa).

The active-site Proton acceptor is the Y155. K159 serves as a coordination point for NAD(+). Residues 288–308 traverse the membrane as a helical segment; that stretch reads ISLEYWLAFLLEIVSFLLSPI.

The protein belongs to the 3-beta-HSD family.

The protein resides in the endoplasmic reticulum membrane. Its subcellular location is the mitochondrion membrane. It catalyses the reaction a 3beta-hydroxy-Delta(5)-steroid + NAD(+) = a 3-oxo-Delta(5)-steroid + NADH + H(+). It carries out the reaction a 3-oxo-Delta(5)-steroid = a 3-oxo-Delta(4)-steroid. Its pathway is lipid metabolism; steroid biosynthesis. In terms of biological role, 3-beta-HSD is a bifunctional enzyme, that catalyzes the oxidative conversion of Delta(5)-ene-3-beta-hydroxy steroid, and the oxidative conversion of ketosteroids. The 3-beta-HSD enzymatic system plays a crucial role in the biosynthesis of all classes of hormonal steroids. The polypeptide is 3 beta-hydroxysteroid dehydrogenase/Delta 5--&gt;4-isomerase (HSD3B) (Canis lupus familiaris (Dog)).